A 567-amino-acid polypeptide reads, in one-letter code: Myo-inositol transporter 1 (567 aa).

At 1-88 (MSARPAQPNI…KFVWMLVSAA (88 aa)) the chain is on the cytoplasmic side. Residues 14–42 (IRTSLSGYPSPTHSGSSTPASLEFSDGRL) are disordered. Residues 16–33 (TSLSGYPSPTHSGSSTPA) show a composition bias toward polar residues. Residues 89-109 (AISGLLFGYDTAAISGMLVII) form a helical membrane-spanning segment. At 110 to 123 (KDDLGTILSSWQKE) the chain is on the extracellular side. Residues 124–144 (VITSATTLGALLGGLAAGCVS) traverse the membrane as a helical segment. The Cytoplasmic segment spans residues 145 to 150 (DFTGRR). Residues 151–171 (LVIVFANVAFIGGSICQAACH) traverse the membrane as a helical segment. Residues 172–180 (TVAAMIAGR) lie on the Extracellular side of the membrane. A helical membrane pass occupies residues 181-201 (FIVGLGVGLASCIVPLYIGEL). Topologically, residues 202 to 209 (APTMIRGR) are cytoplasmic. The helical transmembrane segment at 210-230 (LVTINCVAVTLGQVVAYAIGA) threads the bilayer. Residues 231–240 (SFQNVHNGWR) lie on the Extracellular side of the membrane. A helical transmembrane segment spans residues 241–261 (WIVGLGAMPSFVQLAAIGFLP). At 262–343 (ESPRILLLRS…IGCGLQAAQQ (82 aa)) the chain is on the cytoplasmic side. A helical transmembrane segment spans residues 344-364 (LCGFNTLMYYSATIFAMLGFN). N-linked (GlcNAc...) asparagine glycosylation occurs at N365. The Extracellular portion of the chain corresponds to 365-367 (NAT). The helical transmembrane segment at 368–388 (AVGLIVATVNVLFTLVALKIV) threads the bilayer. Topologically, residues 389 to 397 (DPVGRRRTM) are cytoplasmic. The chain crosses the membrane as a helical span at residues 398 to 418 (LFTLPIMILALVFAAIFFYYL). The Extracellular portion of the chain corresponds to 419 to 435 (TLSTNGILIEDHDYPRS). Residues 436–456 (LSILVLLSMLLYVAGYATGLG) form a helical membrane-spanning segment. The Cytoplasmic portion of the chain corresponds to 457-476 (NIPWQQGELFRLEVRGIGTS). The helical transmembrane segment at 477–497 (ICTAVNWSCNMLIAGTFLSLM) threads the bilayer. Residues 498 to 503 (DAATPS) are Extracellular-facing. A helical transmembrane segment spans residues 504–524 (GAFGIYAGFCVIGWVFCWMLY). The Cytoplasmic portion of the chain corresponds to 525 to 567 (PETSGLSLEEVYFVFEEGFGIKKSQQLRKQKLVEAAKLKAIFE).

It belongs to the major facilitator superfamily. Sugar transporter (TC 2.A.1.1) family.

The protein localises to the cell membrane. It catalyses the reaction myo-inositol(out) + H(+)(out) = myo-inositol(in) + H(+)(in). Functionally, may function as a transporter or as a sensor for myo-inositol. The protein is Myo-inositol transporter 1 of Cryptococcus neoformans var. grubii serotype A (strain H99 / ATCC 208821 / CBS 10515 / FGSC 9487) (Filobasidiella neoformans var. grubii).